A 160-amino-acid chain; its full sequence is Cytochrome b6-f complex subunit 4 (160 aa).

A run of 3 helical transmembrane segments spans residues 36-56 (LLYI…GLAV), 95-115 (LLGI…PFIE), and 131-151 (VVFL…CLPI).

The protein belongs to the cytochrome b family. PetD subfamily. As to quaternary structure, the 4 large subunits of the cytochrome b6-f complex are cytochrome b6, subunit IV (17 kDa polypeptide, PetD), cytochrome f and the Rieske protein, while the 4 small subunits are PetG, PetL, PetM and PetN. The complex functions as a dimer.

It is found in the cellular thylakoid membrane. Component of the cytochrome b6-f complex, which mediates electron transfer between photosystem II (PSII) and photosystem I (PSI), cyclic electron flow around PSI, and state transitions. This chain is Cytochrome b6-f complex subunit 4, found in Prochlorococcus marinus (strain MIT 9515).